Here is a 182-residue protein sequence, read N- to C-terminus: NADH-quinone oxidoreductase subunit I (182 aa).

4Fe-4S ferredoxin-type domains lie at 52–82 (LTRD…LQKA) and 92–121 (DFFR…LTPD). 8 residues coordinate [4Fe-4S] cluster: Cys62, Cys65, Cys68, Cys72, Cys101, Cys104, Cys107, and Cys111.

Belongs to the complex I 23 kDa subunit family. In terms of assembly, NDH-1 is composed of 13 different subunits. Subunits NuoA, H, J, K, L, M, N constitute the membrane sector of the complex. It depends on [4Fe-4S] cluster as a cofactor.

It localises to the cell inner membrane. The enzyme catalyses a quinone + NADH + 5 H(+)(in) = a quinol + NAD(+) + 4 H(+)(out). In terms of biological role, NDH-1 shuttles electrons from NADH, via FMN and iron-sulfur (Fe-S) centers, to quinones in the respiratory chain. The immediate electron acceptor for the enzyme in this species is believed to be ubiquinone. Couples the redox reaction to proton translocation (for every two electrons transferred, four hydrogen ions are translocated across the cytoplasmic membrane), and thus conserves the redox energy in a proton gradient. Required for plants roots colonization. This is NADH-quinone oxidoreductase subunit I (nuoI) from Pseudomonas fluorescens.